Consider the following 442-residue polypeptide: Histidine--tRNA ligase (442 aa).

It belongs to the class-II aminoacyl-tRNA synthetase family. Homodimer.

Its subcellular location is the cytoplasm. The enzyme catalyses tRNA(His) + L-histidine + ATP = L-histidyl-tRNA(His) + AMP + diphosphate + H(+). The polypeptide is Histidine--tRNA ligase (Helicobacter pylori (strain G27)).